Reading from the N-terminus, the 157-residue chain is Ribonuclease (157 aa).

Positions 1–34 are cleaved as a signal peptide; that stretch reads MMKMEGIALKKRLSWISVCLLVLVSAAGMLFSTA. A propeptide spanning residues 35-47 is cleaved from the precursor; the sequence is AKTETSSHKAHTE. Glu-120 functions as the Proton acceptor in the catalytic mechanism. Residue His-149 is the Proton donor of the active site.

It belongs to the ribonuclease N1/T1 family.

The protein resides in the secreted. Functionally, hydrolyzes phosphodiester bonds in RNA, poly- and oligoribonucleotides resulting in 3'-nucleoside monophosphates via 2',3'-cyclophosphate intermediates. This is Ribonuclease from Bacillus amyloliquefaciens (Bacillus velezensis).